We begin with the raw amino-acid sequence, 301 residues long: 5'-adenylylsulfate reductase-like 5 (301 aa).

Residues 1–21 form the signal peptide; that stretch reads MTRCAVVAAVAAVLLVAGAAA. The Thioredoxin domain occupies 51-164; sequence CIRIEPSPPV…LVDFYKETTG (114 aa). N-linked (GlcNAc...) asparagine glycosylation occurs at N139. The chain crosses the membrane as a helical span at residues 201–221; sequence FVLLAVLFIILKVAAHFVPIV. N268 carries an N-linked (GlcNAc...) asparagine glycan.

The protein localises to the membrane. In Oryza sativa subsp. japonica (Rice), this protein is 5'-adenylylsulfate reductase-like 5 (APRL5).